Consider the following 280-residue polypeptide: Putative pyruvate, phosphate dikinase regulatory protein (280 aa).

158–165 (GVSRTSKT) lines the ADP pocket.

It belongs to the pyruvate, phosphate/water dikinase regulatory protein family. PDRP subfamily.

It carries out the reaction N(tele)-phospho-L-histidyl/L-threonyl-[pyruvate, phosphate dikinase] + ADP = N(tele)-phospho-L-histidyl/O-phospho-L-threonyl-[pyruvate, phosphate dikinase] + AMP + H(+). The catalysed reaction is N(tele)-phospho-L-histidyl/O-phospho-L-threonyl-[pyruvate, phosphate dikinase] + phosphate + H(+) = N(tele)-phospho-L-histidyl/L-threonyl-[pyruvate, phosphate dikinase] + diphosphate. In terms of biological role, bifunctional serine/threonine kinase and phosphorylase involved in the regulation of the pyruvate, phosphate dikinase (PPDK) by catalyzing its phosphorylation/dephosphorylation. This Lactobacillus gasseri (strain ATCC 33323 / DSM 20243 / BCRC 14619 / CIP 102991 / JCM 1131 / KCTC 3163 / NCIMB 11718 / NCTC 13722 / AM63) protein is Putative pyruvate, phosphate dikinase regulatory protein.